The primary structure comprises 577 residues: ATP-dependent zinc metalloprotease FtsH (577 aa).

Residues 1 to 3 are Cytoplasmic-facing; it reads MKK. The helical transmembrane segment at 4 to 24 threads the bilayer; that stretch reads LYWIILIAVVLACSGILMSLH. Residues 25 to 98 are Extracellular-facing; sequence LSVTKEEMTY…IKVDNSDSYS (74 aa). The chain crosses the membrane as a helical span at residues 99 to 119; it reads ATKVIQIILIITVGTGVFLFI. Topologically, residues 120–577 are cytoplasmic; it reads RTSGGKDKPL…IDRICLKEAV (458 aa). 186–193 lines the ATP pocket; the sequence is GPPGTGKT. A Zn(2+)-binding site is contributed by His-409. Glu-410 is an active-site residue. Positions 413 and 487 each coordinate Zn(2+).

The protein in the central section; belongs to the AAA ATPase family. In the C-terminal section; belongs to the peptidase M41 family. In terms of assembly, homohexamer. Zn(2+) serves as cofactor.

Its subcellular location is the cell membrane. In terms of biological role, acts as a processive, ATP-dependent zinc metallopeptidase for both cytoplasmic and membrane proteins. Plays a role in the quality control of integral membrane proteins. The chain is ATP-dependent zinc metalloprotease FtsH from Lachnoclostridium phytofermentans (strain ATCC 700394 / DSM 18823 / ISDg) (Clostridium phytofermentans).